The following is a 331-amino-acid chain: Cytosolic sulfotransferase 8 (331 aa).

Positions 1-11 (MGEKDIPRNLK) are enriched in basic and acidic residues. Residues 1–31 (MGEKDIPRNLKEEEEEEEENQSEETKSLISS) are disordered. The span at 12–22 (EEEEEEEENQS) shows a compositional bias: acidic residues. Residue 80 to 85 (KSGTTW) coordinates 3'-phosphoadenylyl sulfate. His-145 functions as the Proton acceptor in the catalytic mechanism. Residues Arg-167, Ser-175, Tyr-231, and 297-299 (RKG) each bind 3'-phosphoadenylyl sulfate.

The protein belongs to the sulfotransferase 1 family. In terms of tissue distribution, expressed in seedlings and roots.

The protein localises to the cytoplasm. In terms of biological role, sulfotransferase that utilizes 3'-phospho-5'-adenylyl sulfate (PAPS) as sulfonate donor. No activity with brassinosteroids. The sequence is that of Cytosolic sulfotransferase 8 (SOT8) from Arabidopsis thaliana (Mouse-ear cress).